The sequence spans 1036 residues: uncharacterized protein (1036 aa).

Helical transmembrane passes span 4–24 and 1004–1024; these read YLFIPLLVSFLFPVALANASL and ILWVIFGIIISLMISSAVLFL.

This sequence belongs to the MG414/MG415 family.

It localises to the cell membrane. This is an uncharacterized protein from Mycoplasma genitalium (strain ATCC 33530 / DSM 19775 / NCTC 10195 / G37) (Mycoplasmoides genitalium).